The following is a 511-amino-acid chain: Glucans biosynthesis protein G (511 aa).

Positions 1–22 (MMKMRWLSAAVMLTLYTSSSWA) are cleaved as a signal peptide.

The protein belongs to the OpgD/OpgG family.

It localises to the periplasm. Its pathway is glycan metabolism; osmoregulated periplasmic glucan (OPG) biosynthesis. In terms of biological role, involved in the biosynthesis of osmoregulated periplasmic glucans (OPGs). In Shigella dysenteriae serotype 1 (strain Sd197), this protein is Glucans biosynthesis protein G.